We begin with the raw amino-acid sequence, 346 residues long: S-adenosylmethionine:tRNA ribosyltransferase-isomerase (346 aa).

It belongs to the QueA family. Monomer.

Its subcellular location is the cytoplasm. It catalyses the reaction 7-aminomethyl-7-carbaguanosine(34) in tRNA + S-adenosyl-L-methionine = epoxyqueuosine(34) in tRNA + adenine + L-methionine + 2 H(+). It participates in tRNA modification; tRNA-queuosine biosynthesis. Its function is as follows. Transfers and isomerizes the ribose moiety from AdoMet to the 7-aminomethyl group of 7-deazaguanine (preQ1-tRNA) to give epoxyqueuosine (oQ-tRNA). This Shewanella denitrificans (strain OS217 / ATCC BAA-1090 / DSM 15013) protein is S-adenosylmethionine:tRNA ribosyltransferase-isomerase.